Here is a 443-residue protein sequence, read N- to C-terminus: Diels-Alderase poxQ (443 aa).

The N-terminal stretch at methionine 1–alanine 23 is a signal peptide. 3 N-linked (GlcNAc...) asparagine glycosylation sites follow: asparagine 78, asparagine 97, and asparagine 145.

This sequence belongs to the Diels-Alderase family.

Its pathway is secondary metabolite biosynthesis. In terms of biological role, diels-Alderase; part of the gene cluster that mediates the biosynthesis of oxaleimides, cytotoxic compounds containing an unusual disubstituted succinimide moiety. The first step of the pathway is provided by the HR-PKS poxF that serves in a new mode of collaborative biosynthesis with the PKS-NRPS poxE, by providing the olefin containing amino acid substrate via the synthesis of an ACP-bound dec-4-enoate. The cytochrome P450 monooxygenase poxM-catalyzed oxidation at the alpha-position creates the enzyme-bound 2-hydroxydec-4-enoyl-ACP thioester, which may be prone to spontaneous hydrolysis to yield 2-hydroxydec-4-enoic acid due to increased electrophilicity of the carbonyl. 2-hydroxydec-4-enoic acid can then be further oxidized by poxM to yield the alpha-ketoacid 2-oxodec-4-enoicacid, which is reductively aminated by the aminotransferase poxL to yield (S,E)-2-aminodec-4-enoic acid. The Hybrid PKS-NRPS synthetase poxE then performs condensation between the octaketide product of its PKS modules and the amino group of (S,E)-2-aminodec-4-enoic acid which is activated and incorporated by the adenylation domain. The resulting aminoacyl product can be cyclized by the Diels-Alderase PoxQ and reductively released by the reductive (R) domain of poxE to yield an aldehyde intermediate. The released aldehyde is then substrate for a Knoevenagel condensation by the hydrolyase poxO followed by an oxidation at the 5-position of the pyrrolidone ring. The presence of the olefin from the amino acid building block allows for migration of the substituted allyl group to occur. This allylic transposition reaction takes place in a conjugate addition, semipinacol-like fashion to yield a succinimide intermediate. Iterative two-electron oxidations of the C7 methyl of the succinimide intermediate to the carboxylic acid can be catalyzed by one of two remaining cytochrome P450 monooxygenasess poxC or poxD to yield oxaleimide A. Subsequent oxidation yields the maleimide scaffold oxaleimide I. Both oxaleimide A and oxaleimide I can undergo oxidative modifications in the decalin ring to yield the series of products oxaleimides B to H. This chain is Diels-Alderase poxQ, found in Penicillium oxalicum (strain 114-2 / CGMCC 5302) (Penicillium decumbens).